Consider the following 775-residue polypeptide: Aconitate hydratase, mitochondrial (775 aa).

Residues 1–25 constitute a mitochondrion transit peptide; the sequence is MLTTLARASAMLLGARGFASAADLD. Residues Gln-95 and 188–190 contribute to the substrate site; that span reads DSH. Asn-337 carries N-linked (GlcNAc...) asparagine glycosylation. Cys-381 serves as a coordination point for [4Fe-4S] cluster. Asn-383 is a glycosylation site (N-linked (GlcNAc...) asparagine). Residues Cys-444 and Cys-447 each coordinate [4Fe-4S] cluster. Arg-470 is a substrate binding site. N-linked (GlcNAc...) asparagine glycosylation occurs at Asn-471. The substrate site is built by Arg-475 and Arg-603. Asn-608 carries an N-linked (GlcNAc...) asparagine glycan. 666–667 contacts substrate; it reads SR. Asn-754 and Asn-763 each carry an N-linked (GlcNAc...) asparagine glycan.

Belongs to the aconitase/IPM isomerase family. Monomer. It depends on [4Fe-4S] cluster as a cofactor.

The protein resides in the mitochondrion. The enzyme catalyses citrate = D-threo-isocitrate. It participates in carbohydrate metabolism; tricarboxylic acid cycle; isocitrate from oxaloacetate: step 2/2. Functionally, catalyzes the isomerization of citrate to isocitrate via cis-aconitate. The sequence is that of Aconitate hydratase, mitochondrial from Arthroderma benhamiae (strain ATCC MYA-4681 / CBS 112371) (Trichophyton mentagrophytes).